Consider the following 603-residue polypeptide: MSFVIAAPETLVRAASDLANIGSTLGAANAAALGPTTELLAAGADEVSAAIASLFAAHGQAYQAVSAQMSAFHAQFVQTFTAGAGAYASAEAAAAAPLEGLLNIVNTPTQLLLGRPLIGNGANGAPGTGQAGGAGGLLYGNGGAGGSGAPGQAGGPGGAAGLFGNGGAGGAGGDGPGNGAAGGAGGAGGLLFGSGGAGGPGGVGNTGTGGLGGDGGAAGLFGAGGIGGAGGPGFNGGAGGAGGRSGLFEVLAAGGAGGTGGLSVNGGTGGTGGTGGGGGLFSNGGAGGAGGFGVSGSAGGNGGTGGDGGIFTGNGGTGGTGGTGTGNQLVGGEGGAGGAGGNAGILFGAGGIGGTGGTGLGAPDPGGTGGKGGVGGIGGAGALFGPGGAGGTGGFGASSADQMAGGIGGSGGSGGAAKLIGDGGAGGTGGDSVRGAAGSGGTGGTGGLIGDGGAGGAGGTGIEFGSVGGAGGAGGNAAGLSGAGGAGGAGGFGETAGDGGAGGNAGLLNGDGGAGGAGGLGIAGDGGNGGKGGKAGMVGNGGDGGAGGASVVANGGVGGSGGNATLIGNGGNGGNGGVGSAPGKGGAGGTAGLLGLNGSPGLS.

Residues 1–93 form the PE domain; sequence MSFVIAAPET…AGAYASAEAA (93 aa).

Belongs to the mycobacterial PE family. PGRS subfamily.

This is an uncharacterized protein from Mycobacterium tuberculosis (strain ATCC 25618 / H37Rv).